The chain runs to 317 residues: Melanocyte-stimulating hormone receptor (317 aa).

Topologically, residues 1 to 37 are extracellular; sequence MAVQGSQRRLLGSLNSTPTAIPQLGLAANQTGARCLE. N-linked (GlcNAc...) asparagine glycosylation occurs at N29. A helical transmembrane segment spans residues 38–63; the sequence is VSIPDGLFLSLGLVSLVENMLVVATI. Residues 64 to 72 are Cytoplasmic-facing; sequence AKNRNLHSP. The chain crosses the membrane as a helical span at residues 73-93; sequence MYCFICCLALSDLLVSGSNVL. Over 94–118 the chain is Extracellular; it reads ETAVILLLEAGALVARAAVLQQVDN. Residues 119 to 140 traverse the membrane as a helical segment; the sequence is VIDVITCSSMLSSLCFLGAIAV. Residues 141–163 lie on the Cytoplasmic side of the membrane; the sequence is DRYISIFYALRYHSIVTLPRARR. Residues 164-183 form a helical membrane-spanning segment; it reads AIAAIWVASVLFSTLFIAYC. Residues 184-191 are Extracellular-facing; the sequence is DHTAVLLC. Residues 192 to 211 traverse the membrane as a helical segment; that stretch reads LVVFFLAVLVLMAVLYVHML. Residues 212–240 lie on the Cytoplasmic side of the membrane; that stretch reads ARACQHAQGIARLHKRQRPVHQGFGLKGA. A helical transmembrane segment spans residues 241–266; that stretch reads VTLTILLGIFFLCWGPFFLHLTLIVL. The Extracellular segment spans residues 267–279; that stretch reads CPEHPTCGCIFKN. Residues 280–300 traverse the membrane as a helical segment; sequence FNLFLALIICNAIIDPLIYAF. Topologically, residues 301–317 are cytoplasmic; the sequence is HSQELRRTLKEVLTCSW. C315 carries the S-palmitoyl cysteine lipid modification.

This sequence belongs to the G-protein coupled receptor 1 family. In terms of assembly, interacts with MGRN1, but does not undergo MGRN1-mediated ubiquitination; this interaction competes with GNAS-binding and thus inhibits agonist-induced cAMP production. Interacts with OPN3; the interaction results in a decrease in MC1R-mediated cAMP signaling and ultimately a decrease in melanin production in melanocytes.

It is found in the cell membrane. Receptor for MSH (alpha, beta and gamma) and ACTH. The activity of this receptor is mediated by G proteins which activate adenylate cyclase. Mediates melanogenesis, the production of eumelanin (black/brown) and phaeomelanin (red/yellow), via regulation of cAMP signaling in melanocytes. This chain is Melanocyte-stimulating hormone receptor (MC1R), found in Pan troglodytes (Chimpanzee).